A 156-amino-acid chain; its full sequence is Small ribosomal subunit protein uS7 (156 aa).

This sequence belongs to the universal ribosomal protein uS7 family. As to quaternary structure, part of the 30S ribosomal subunit. Contacts proteins S9 and S11.

In terms of biological role, one of the primary rRNA binding proteins, it binds directly to 16S rRNA where it nucleates assembly of the head domain of the 30S subunit. Is located at the subunit interface close to the decoding center, probably blocks exit of the E-site tRNA. This is Small ribosomal subunit protein uS7 from Pseudomonas syringae pv. syringae (strain B728a).